The sequence spans 356 residues: Glutamine synthetase nodule isozyme (356 aa).

The GS beta-grasp domain occupies 19–99 (IIAEYIWVGG…VICDVYTPAG (81 aa)). Positions 106–356 (KRHNAAKIFS…IAETTLLWKP (251 aa)) constitute a GS catalytic domain.

It belongs to the glutamine synthetase family. Homooctamer. As to expression, found at highest levels in root nodules.

It is found in the cytoplasm. It catalyses the reaction L-glutamate + NH4(+) + ATP = L-glutamine + ADP + phosphate + H(+). The chain is Glutamine synthetase nodule isozyme (GS1) from Medicago sativa (Alfalfa).